Reading from the N-terminus, the 397-residue chain is F-box protein At4g11590 (397 aa).

Positions 24–70 constitute an F-box domain; it reads EKNFNDVPLDVAIEIFMRLPVKSVARFLLLSKFWAEIIRSRHFITSF.

In terms of assembly, part of a SCF (ASK-cullin-F-box) protein ligase complex. Interacts with ASK16.

The protein localises to the nucleus. It participates in protein modification; protein ubiquitination. Functionally, component of SCF(ASK-cullin-F-box) E3 ubiquitin ligase complexes, which may mediate the ubiquitination and subsequent proteasomal degradation of target proteins. In Arabidopsis thaliana (Mouse-ear cress), this protein is F-box protein At4g11590.